The chain runs to 121 residues: Large ribosomal subunit protein bL12 (121 aa).

This sequence belongs to the bacterial ribosomal protein bL12 family. As to quaternary structure, homodimer. Part of the ribosomal stalk of the 50S ribosomal subunit. Forms a multimeric L10(L12)X complex, where L10 forms an elongated spine to which 2 to 4 L12 dimers bind in a sequential fashion. Binds GTP-bound translation factors.

Forms part of the ribosomal stalk which helps the ribosome interact with GTP-bound translation factors. Is thus essential for accurate translation. This is Large ribosomal subunit protein bL12 from Pseudomonas fluorescens (strain SBW25).